The sequence spans 262 residues: Putative 1-acyl-sn-glycerol-3-phosphate acyltransferase acl-1 (262 aa).

3 consecutive transmembrane segments (helical) span residues 3–23 (FLAILFVIAVLLLLAQLPVIG), 29–49 (VYFGMCLIIGGFLGGLASIPF), and 89–109 (IIIANHQSALDVLGMSFAWPV). Positions 94-99 (HQSALD) match the HXXXXD motif motif.

The protein belongs to the 1-acyl-sn-glycerol-3-phosphate acyltransferase family.

The protein localises to the membrane. The enzyme catalyses a 1-acyl-sn-glycero-3-phosphate + an acyl-CoA = a 1,2-diacyl-sn-glycero-3-phosphate + CoA. It functions in the pathway phospholipid metabolism; CDP-diacylglycerol biosynthesis; CDP-diacylglycerol from sn-glycerol 3-phosphate: step 2/3. Functionally, converts lysophosphatidic acid (LPA) into phosphatidic acid by incorporating an acyl moiety at the sn-2 position of the glycerol backbone. This Caenorhabditis elegans protein is Putative 1-acyl-sn-glycerol-3-phosphate acyltransferase acl-1 (acl-1).